Consider the following 520-residue polypeptide: GMP synthase [glutamine-hydrolyzing] (520 aa).

Residues 9–202 enclose the Glutamine amidotransferase type-1 domain; that stretch reads KILILDFGSQ…VRQICGCTGQ (194 aa). Residue Cys86 is the Nucleophile of the active site. Residues His176 and Glu178 contribute to the active site. In terms of domain architecture, GMPS ATP-PPase spans 203-395; the sequence is WTPGQIIEDA…LGLPHPMVYR (193 aa). 230-236 provides a ligand contact to ATP; sequence SGGVDSS.

Homodimer.

It catalyses the reaction XMP + L-glutamine + ATP + H2O = GMP + L-glutamate + AMP + diphosphate + 2 H(+). Its pathway is purine metabolism; GMP biosynthesis; GMP from XMP (L-Gln route): step 1/1. Functionally, catalyzes the synthesis of GMP from XMP. This chain is GMP synthase [glutamine-hydrolyzing], found in Syntrophotalea carbinolica (strain DSM 2380 / NBRC 103641 / GraBd1) (Pelobacter carbinolicus).